The chain runs to 529 residues: Phenylalanine N-monooxygenase (529 aa).

Residues 1-21 traverse the membrane as a helical segment; the sequence is MLDSTPMLAFIIGLLLLALTM. Position 467 (cysteine 467) interacts with heme.

It belongs to the cytochrome P450 family. The cofactor is heme.

The protein resides in the endoplasmic reticulum membrane. It catalyses the reaction L-phenylalanine + 2 reduced [NADPH--hemoprotein reductase] + 2 O2 = (E)-phenylacetaldehyde oxime + 2 oxidized [NADPH--hemoprotein reductase] + CO2 + 3 H2O + 2 H(+). Its pathway is secondary metabolite biosynthesis; phenylglucosinolate biosynthesis. Converts L-phenylalanine into phenylacetaldoxime, the precursor of benzylglucosinolate (glucotropeolin). This chain is Phenylalanine N-monooxygenase (CYP79A2), found in Arabidopsis thaliana (Mouse-ear cress).